The chain runs to 217 residues: Somatotropin (217 aa).

Residues 1–26 (MATGSRTSLLLAFTLLCLPQLKEAGA) form the signal peptide. H44 lines the Zn(2+) pocket. Residues C79 and C191 are joined by a disulfide bond. Position 132 is a phosphoserine (S132). Zn(2+) is bound at residue E200. A disulfide bond links C208 and C215.

It belongs to the somatotropin/prolactin family.

It localises to the secreted. In terms of biological role, plays an important role in growth control. Its major role in stimulating body growth is to stimulate the liver and other tissues to secrete IGF1. It stimulates both the differentiation and proliferation of myoblasts. It also stimulates amino acid uptake and protein synthesis in muscle and other tissues. This chain is Somatotropin (GH1), found in Saimiri boliviensis boliviensis (Bolivian squirrel monkey).